We begin with the raw amino-acid sequence, 3072 residues long: E1A-binding protein p400 (3072 aa).

A compositionally biased stretch (polar residues) spans 1–22 (MHHGSGPQNVQHQLQRSRSFTG). Disordered stretches follow at residues 1–55 (MHHG…SPGY), 125–149 (PMSQ…LQNV), and 222–250 (LSQP…TGLQ). Residues 31–40 (PNLPPSPAAP) show a composition bias toward pro residues. Composition is skewed to low complexity over residues 41 to 53 (FAPS…PQSP) and 125 to 136 (PMSQQVQTQSPT). Residues S52 and S134 each carry the phosphoserine modification. Phosphoserine occurs at positions 315 and 321. 3 disordered regions span residues 485 to 519 (SLTG…KRPR), 544 to 601 (MPTV…ASVP), and 635 to 769 (APIP…SQDK). Residues 556-569 (QATQLTGQKQSQQQ) show a composition bias toward low complexity. Residues 570-583 (YDPSTGPPVQNAAS) show a composition bias toward polar residues. Residues 586 to 599 (TPPPQLPARLPPAS) are compositionally biased toward pro residues. 3 stretches are compositionally biased toward low complexity: residues 646–657 (PAPSSQPAQPAL), 668–682 (QTSQ…VAST), and 695–710 (SLPT…PVSG). 2 stretches are compositionally biased toward polar residues: residues 724-741 (NRPS…TSRS) and 754-765 (SPAQNAASSQDG). Phosphoserine is present on residues S735, S741, and S754. One can recognise an HSA domain in the interval 798 to 870 (LPKLQEAPRP…EQSRLRRIAA (73 aa)). Basic and acidic residues predominate over residues 914 to 928 (ESRLKGFDTSPEHSL). Disordered regions lie at residues 914-952 (ESRL…EDEE) and 997-1024 (FQWP…DRES). T922 is subject to Phosphothreonine. 3 positions are modified to phosphoserine: S923, S927, and S940. A Phosphothreonine modification is found at T944. Residues 950 to 1364 (DEEETIEEEE…SVLSVLTRLQ (415 aa)) are interactions with RUVBL1 and RUVBL2. A phosphoserine mark is found at S1009 and S1010. The 166-residue stretch at 1102-1267 (AKLYRKNLNG…WTMVHFLIPG (166 aa)) folds into the Helicase ATP-binding domain. 1115 to 1122 (DEAGLGKT) provides a ligand contact to ATP. The short motif at 1218 to 1221 (DEMQ) is the DEAD box-like element. K1471 carries the N6-acetyllysine modification. The interval 1473–1503 (EGRTVAFPSTHPPRMANTNTSTATPQGQVRG) is disordered. Residues 1488–1499 (ANTNTSTATPQG) show a composition bias toward polar residues. Phosphoserine is present on residues S1646 and S1650. The region spanning 1815 to 1972 (KLEALAILLQ…GNDYSMAFLT (158 aa)) is the Helicase C-terminal domain. Disordered regions lie at residues 2033–2062 (AQRS…DEEP) and 2203–2227 (KERK…GEAV). The span at 2043–2053 (GSSSVAVSSDS) shows a compositional bias: low complexity. N6-acetyllysine occurs at positions 2265 and 2272. The 70-residue stretch at 2276–2345 (EPAQDSPDWL…QCRNRYENVI (70 aa)) folds into the Myb-like domain. Residues 2440–2699 (KEKKALADQQ…QQQQQQQQQT (260 aa)) are interaction with ZNF42. The disordered stretch occupies residues 2441–2534 (EKKALADQQK…PQSKGQPTMT (94 aa)). Low complexity-rich tracts occupy residues 2446–2455 (ADQQKAQQPP) and 2463–2478 (QQQQ…QQQQ). A compositionally biased stretch (pro residues) spans 2479–2493 (QPPPPPQQPPPPVPQ). A compositionally biased stretch (low complexity) spans 2494–2526 (PQAASSQTPAGQPAVQPQPQPQVQTQPQPVQPQ). The residue at position 2614 (S2614) is a Phosphoserine. Disordered regions lie at residues 2734 to 2790 (QKMQ…TGTT) and 3028 to 3072 (ASLQ…PPCQ). Over residues 2739 to 2754 (PPQPPPPQAQPGPPQQ) the composition is skewed to pro residues. Residues 2755 to 2775 (PAQVQVQTPQPPQQQQSPQLT) show a composition bias toward low complexity. The span at 3042–3053 (PASSDSPSQQPK) shows a compositional bias: polar residues.

Belongs to the SNF2/RAD54 helicase family. SWR1 subfamily. In terms of assembly, component of the NuA4 histone acetyltransferase complex which contains the catalytic subunit KAT5/TIP60 and the subunits EP400, TRRAP/PAF400, BRD8/SMAP, EPC1, DMAP1/DNMAP1, RUVBL1/TIP49, RUVBL2, ING3, actin, ACTL6A/BAF53A, MORF4L1/MRG15, MORF4L2/MRGX, MRGBP, YEATS4/GAS41, VPS72/YL1 and MEAF6. May also participate in the formation of NuA4 related complexes which lack the KAT5/TIP60 catalytic subunit, but which include the SWI/SNF related protein SRCAP. The NuA4 complex interacts with MYC. EP400 interacts with TRRAP, RUVBL1 and RUVBL2. Component of a SWR1-like complex. Interacts with ZNF42. Interacts with PHF5A. As to expression, expressed in brain, thymus, lung, liver, spleen, kidney, colon and bone marrow.

The protein localises to the nucleus. Its function is as follows. Component of the NuA4 histone acetyltransferase complex which is involved in transcriptional activation of select genes principally by acetylation of nucleosomal histones H4 and H2A. This modification may both alter nucleosome - DNA interactions and promote interaction of the modified histones with other proteins which positively regulate transcription. May be required for transcriptional activation of E2F1 and MYC target genes during cellular proliferation. The NuA4 complex ATPase and helicase activities seem to be, at least in part, contributed by the association of RUVBL1 and RUVBL2 with EP400. Component of a SWR1-like complex that specifically mediates the removal of histone H2A.Z/H2AZ1 from the nucleosome. Regulates transcriptional activity of ZNF42. This is E1A-binding protein p400 (Ep400) from Mus musculus (Mouse).